The primary structure comprises 833 residues: Leucine--tRNA ligase (833 aa).

The 'HIGH' region motif lies at 41-52 (PYPSGAGLHVGH). Positions 610–614 (KMSKS) match the 'KMSKS' region motif. K613 is a binding site for ATP.

This sequence belongs to the class-I aminoacyl-tRNA synthetase family.

It is found in the cytoplasm. It carries out the reaction tRNA(Leu) + L-leucine + ATP = L-leucyl-tRNA(Leu) + AMP + diphosphate. The protein is Leucine--tRNA ligase of Streptococcus equi subsp. zooepidemicus (strain MGCS10565).